Consider the following 488-residue polypeptide: MHRVRNKPVKSTATASVKHLIKQRGGDGATAASKSANDYNNNDSLLTDMQEPSIDTDKLSYEIFSILESKFLFGYDDSKPEPANSVVAGSIKNQRGKICILSIDGGGMRGILPGKALAYLEHALKSKSGDPNARIADYFDVAAGSGIGGIYTAMLFGSRDGNRPIFKADDTWQFLTRNAKGLYGGAGILKRVLRTGSGCCSGTAKLKKVMKESFSELTLKDTLKPVLIPCYDLKSSGPFLFSRADALETDGYDFRLSEVCRATWAEPGVFEPVEMKSVDGQTKCVAVGGGLAMSNPTAAAITHVLHNKQEFPFVRGVEDLLVLSLGMGQLLDVSYEYDRIIKWKAKHWARPAALISNDGAADTVDQAVAMAFGHCRSSNYVRIQANGSNLGPWSPNMDTDPSGSNVNMLMGVAEEMLKQKNVESVLFGGKRIDEQSNFEKLDWLAGELVLEHQRRNSRIAPTVAFKQSVHRADQKTSDKDIGVTARER.

The interval 23 to 49 (QRGGDGATAASKSANDYNNNDSLLTDM) is disordered. The segment covering 32 to 47 (ASKSANDYNNNDSLLT) has biased composition (polar residues). The 201-residue stretch at 101-301 (LSIDGGGMRG…AMSNPTAAAI (201 aa)) folds into the PNPLA domain. The GXGXXG signature appears at 105–110 (GGGMRG). S145 functions as the Nucleophile in the catalytic mechanism.

Belongs to the patatin family. In terms of tissue distribution, highly expressed in roots and at lower levels in leaves, stems, flowers and siliques.

Its subcellular location is the cell membrane. In terms of biological role, possesses non-specific lipolytic acyl hydrolase (LAH) activity. Catalyzes the hydrolysis of the galactolipids monogalactosyldiacylglycerol (MGDG) and digalactosyldiacylglycerol (DGDG), and the phoshpolipids phosphatidylcholine (PC), phosphatidylethanolamine (PE), phosphatidylglycerol (PG), phosphatidic acid (PA), phosphatidylserine (PS). Favors the release of fatty acid at the sn-2 position for PC. Possesses acyl-CoA thioesterase activity. Negatively affects disease resistance to the necrotic fungal pathogen Botrytis cinerea and the avirulent bacteria Pseudomonas syringae by promoting cell death and reducing the efficiency of the hypersensitive response, respectively. However, PLP2 contributes to resistance to cucumber mosaic virus (CMV), an obligate parasite inducing hypersensitive response. May negatively regulate oxylipin production, possibly via participating in membrane repair that includes removal of oxidatively modified lipids. Enzymatic products of PLP2 may influence cellulose content and cell elongation. This is Patatin-like protein 7 (PLP7) from Arabidopsis thaliana (Mouse-ear cress).